Here is a 210-residue protein sequence, read N- to C-terminus: tRNA (guanine-N(7)-)-methyltransferase (210 aa).

The S-adenosyl-L-methionine site is built by Glu-36, Glu-61, Asp-90, and Asp-112. Asp-112 is a catalytic residue. Substrate is bound by residues Lys-116, Asp-148, and 188-191 (TEYE).

This sequence belongs to the class I-like SAM-binding methyltransferase superfamily. TrmB family.

It carries out the reaction guanosine(46) in tRNA + S-adenosyl-L-methionine = N(7)-methylguanosine(46) in tRNA + S-adenosyl-L-homocysteine. Its pathway is tRNA modification; N(7)-methylguanine-tRNA biosynthesis. In terms of biological role, catalyzes the formation of N(7)-methylguanine at position 46 (m7G46) in tRNA. The polypeptide is tRNA (guanine-N(7)-)-methyltransferase (Mycoplasma genitalium (strain ATCC 33530 / DSM 19775 / NCTC 10195 / G37) (Mycoplasmoides genitalium)).